A 99-amino-acid chain; its full sequence is Aspartyl/glutamyl-tRNA(Asn/Gln) amidotransferase subunit C (99 aa).

The protein belongs to the GatC family. In terms of assembly, heterotrimer of A, B and C subunits.

It catalyses the reaction L-glutamyl-tRNA(Gln) + L-glutamine + ATP + H2O = L-glutaminyl-tRNA(Gln) + L-glutamate + ADP + phosphate + H(+). It carries out the reaction L-aspartyl-tRNA(Asn) + L-glutamine + ATP + H2O = L-asparaginyl-tRNA(Asn) + L-glutamate + ADP + phosphate + 2 H(+). In terms of biological role, allows the formation of correctly charged Asn-tRNA(Asn) or Gln-tRNA(Gln) through the transamidation of misacylated Asp-tRNA(Asn) or Glu-tRNA(Gln) in organisms which lack either or both of asparaginyl-tRNA or glutaminyl-tRNA synthetases. The reaction takes place in the presence of glutamine and ATP through an activated phospho-Asp-tRNA(Asn) or phospho-Glu-tRNA(Gln). This Rhodococcus erythropolis (strain PR4 / NBRC 100887) protein is Aspartyl/glutamyl-tRNA(Asn/Gln) amidotransferase subunit C.